Consider the following 665-residue polypeptide: Glycine--tRNA ligase beta subunit (665 aa).

Belongs to the class-II aminoacyl-tRNA synthetase family. As to quaternary structure, tetramer of two alpha and two beta subunits.

It localises to the cytoplasm. The catalysed reaction is tRNA(Gly) + glycine + ATP = glycyl-tRNA(Gly) + AMP + diphosphate. The protein is Glycine--tRNA ligase beta subunit (glyS) of Rickettsia prowazekii (strain Madrid E).